The sequence spans 279 residues: Putative pyruvate, phosphate dikinase regulatory protein (279 aa).

Position 153–160 (153–160 (GVSRTSKT)) interacts with ADP.

The protein belongs to the pyruvate, phosphate/water dikinase regulatory protein family. PDRP subfamily.

It catalyses the reaction N(tele)-phospho-L-histidyl/L-threonyl-[pyruvate, phosphate dikinase] + ADP = N(tele)-phospho-L-histidyl/O-phospho-L-threonyl-[pyruvate, phosphate dikinase] + AMP + H(+). The catalysed reaction is N(tele)-phospho-L-histidyl/O-phospho-L-threonyl-[pyruvate, phosphate dikinase] + phosphate + H(+) = N(tele)-phospho-L-histidyl/L-threonyl-[pyruvate, phosphate dikinase] + diphosphate. Functionally, bifunctional serine/threonine kinase and phosphorylase involved in the regulation of the pyruvate, phosphate dikinase (PPDK) by catalyzing its phosphorylation/dephosphorylation. This chain is Putative pyruvate, phosphate dikinase regulatory protein, found in Rhodopseudomonas palustris (strain BisB5).